The sequence spans 239 residues: UPF0502 protein Bcen_5249 (239 aa).

The segment at 196-239 (IRGAKGRTEAPRGRSGATQCAGSTDGERTRHRRRRTGRRVLIAS) is disordered. Residues 224–233 (TRHRRRRTGR) are compositionally biased toward basic residues.

The protein belongs to the UPF0502 family.

This is UPF0502 protein Bcen_5249 from Burkholderia orbicola (strain AU 1054).